Here is a 369-residue protein sequence, read N- to C-terminus: Protein RecA (369 aa).

77–84 (GPESSGKT) lines the ATP pocket.

Belongs to the RecA family.

Its subcellular location is the cytoplasm. Can catalyze the hydrolysis of ATP in the presence of single-stranded DNA, the ATP-dependent uptake of single-stranded DNA by duplex DNA, and the ATP-dependent hybridization of homologous single-stranded DNAs. It interacts with LexA causing its activation and leading to its autocatalytic cleavage. In Corynebacterium pseudotuberculosis (strain C231), this protein is Protein RecA.